Reading from the N-terminus, the 112-residue chain is Conotoxin vil14.4 (112 aa).

The N-terminal stretch at 1–22 is a signal peptide; sequence MGFRVLVLVVMATTSALPFTFF. A propeptide spanning residues 23 to 85 is cleaved from the precursor; that stretch reads EEPGRSPFRP…FAELSVGQRR (63 aa). 2 disulfide bridges follow: Cys-91–Cys-111 and Cys-95–Cys-107.

It belongs to the conotoxin R superfamily. In terms of tissue distribution, expressed by the venom duct.

The protein localises to the secreted. The protein is Conotoxin vil14.4 of Conus villepinii (Villepin's cone).